The following is a 507-amino-acid chain: Beta-Ala-His dipeptidase (507 aa).

The signal sequence occupies residues 1 to 26; sequence MDPKLGRMAASLLAVLLLLLERGMFS. H132 contributes to the Zn(2+) binding site. The active site involves D134. Position 165 (D165) interacts with Zn(2+). The Proton acceptor role is filled by E199. E200 contributes to the Zn(2+) binding site. S219 carries the post-translational modification Phosphoserine. D228 is a Zn(2+) binding site. N-linked (GlcNAc...) asparagine glycans are attached at residues N322 and N382. H478 serves as a coordination point for Zn(2+).

The protein belongs to the peptidase M20A family. Homodimer. It depends on Zn(2+) as a cofactor. In terms of tissue distribution, found in serum and adult nervous central system. Absent in serum from patients with homocarnosinosis.

The protein localises to the secreted. The catalysed reaction is Preferential hydrolysis of the beta-Ala-|-His dipeptide (carnosine), and also anserine, Xaa-|-His dipeptides and other dipeptides including homocarnosine.. The enzyme catalyses carnosine + H2O = beta-alanine + L-histidine. It catalyses the reaction anserine + H2O = N(pros)-methyl-L-histidine + beta-alanine. It carries out the reaction L-alanyl-L-histidine + H2O = L-histidine + L-alanine. The catalysed reaction is glycyl-L-histidine + H2O = L-histidine + glycine. The enzyme catalyses L-homocarnosine + H2O = 4-aminobutanoate + L-histidine. Activated by cadmium ions. Inhibited by the metal chelator 1,10-o-phenantrolin. The inhibitory concentration 50% (IC(50)) is 5 uM. Catalyzes the peptide bond hydrolysis in Xaa-His dipeptides, displaying the highest activity toward carnosine (beta-alanyl-L-histidine) and anserine (beta-alanyl-3-methyl-histidine). The chain is Beta-Ala-His dipeptidase from Homo sapiens (Human).